The primary structure comprises 404 residues: Cysteine desulfurase IscS (404 aa).

Residues 75–76, Asn155, Gln183, and 203–205 contribute to the pyridoxal 5'-phosphate site; these read AT and SAH. Lys206 carries the N6-(pyridoxal phosphate)lysine modification. Thr243 contacts pyridoxal 5'-phosphate. Catalysis depends on Cys328, which acts as the Cysteine persulfide intermediate. [2Fe-2S] cluster is bound at residue Cys328.

It belongs to the class-V pyridoxal-phosphate-dependent aminotransferase family. NifS/IscS subfamily. In terms of assembly, homodimer. Forms a heterotetramer with IscU, interacts with other sulfur acceptors. Pyridoxal 5'-phosphate is required as a cofactor.

The protein resides in the cytoplasm. It carries out the reaction (sulfur carrier)-H + L-cysteine = (sulfur carrier)-SH + L-alanine. The protein operates within cofactor biosynthesis; iron-sulfur cluster biosynthesis. In terms of biological role, master enzyme that delivers sulfur to a number of partners involved in Fe-S cluster assembly, tRNA modification or cofactor biosynthesis. Catalyzes the removal of elemental sulfur atoms from cysteine to produce alanine. Functions as a sulfur delivery protein for Fe-S cluster synthesis onto IscU, an Fe-S scaffold assembly protein, as well as other S acceptor proteins. The protein is Cysteine desulfurase IscS of Colwellia psychrerythraea (strain 34H / ATCC BAA-681) (Vibrio psychroerythus).